Reading from the N-terminus, the 841-residue chain is ATP-dependent helicase Lhr-Core (841 aa).

ATP is bound by residues Gln-39, Lys-62, Thr-63, Asp-181, Glu-182, Ile-352, Arg-369, and His-372. Positions 43–234 (IKEIHEGKNV…FLVGNGRDCY (192 aa)) constitute a Helicase ATP-binding domain. A DEVH box motif is present at residues 181 to 184 (DEIH). A Helicase C-terminal domain is found at 266–416 (RLYNLLKKLI…RIHIPKNCLD (151 aa)). Residues 417–500 (VLAQHLVGMA…IYYMNVGTIP (84 aa)) are WH domain. Residues 501 to 841 (DETAVDVIAD…MEFISMKGKK (341 aa)) are domain 4.

The protein belongs to the Lhr helicase family. Lhr-Core subfamily. Monomer.

The enzyme catalyses Couples ATP hydrolysis with the unwinding of duplex DNA by translocating in the 3'-5' direction.. The catalysed reaction is ATP + H2O = ADP + phosphate + H(+). In terms of biological role, DNA helicase that loads on single-stranded (ss)DNA and translocates in a 3'-5' direction, probably involved in DNA repair. Archaeal orthologs have double-stranded (ds)DNA and/or RNA:DNA helicase activity. This Methanocaldococcus jannaschii (strain ATCC 43067 / DSM 2661 / JAL-1 / JCM 10045 / NBRC 100440) (Methanococcus jannaschii) protein is ATP-dependent helicase Lhr-Core.